The primary structure comprises 335 residues: Basic endochitinase B (335 aa).

The N-terminal stretch at 1 to 33 (MPPQKENHRTLNKMKTNLFLFLIFSLLLSLSSA) is a signal peptide. The Chitin-binding type-1 domain maps to 34-75 (EQCGRQAGGALCPNGLCCSEFGWCGNTEPYCKQPGCQSQCTP). Cystine bridges form between Cys-36–Cys-51, Cys-45–Cys-57, Cys-50–Cys-64, Cys-69–Cys-73, Cys-107–Cys-169, Cys-181–Cys-189, and Cys-288–Cys-320. Glu-151 acts as the Proton donor in catalysis. A propeptide spans 329–335 (GLLEAAI) (removed in mature form). The Vacuolar targeting signal motif lies at 329 to 335 (GLLEAAI).

Belongs to the glycosyl hydrolase 19 family. Chitinase class I subfamily. In terms of tissue distribution, high constitutive level in roots with lower levels in leaves and flowering shoots.

Its subcellular location is the vacuole. It carries out the reaction Random endo-hydrolysis of N-acetyl-beta-D-glucosaminide (1-&gt;4)-beta-linkages in chitin and chitodextrins.. Defense against chitin-containing fungal pathogens. Seems particularly implicated in resistance to jasmonate-inducing pathogens such as A.brassicicola. In vitro antifungal activity against T.reesei, but not against A.solani, F.oxysporum, S.sclerotiorum, G.graminis and P.megasperma. The chain is Basic endochitinase B (CHI-B) from Arabidopsis thaliana (Mouse-ear cress).